A 489-amino-acid chain; its full sequence is GTPase Der (489 aa).

EngA-type G domains follow at residues 30-199 (PVVS…KDKP) and 227-403 (FRLA…SRSH). GTP is bound by residues 36-43 (GRQNVGKS), 85-89 (DTPGL), 151-154 (NKAD), 233-240 (GKPNSGKS), 280-284 (DTAGI), and 345-348 (NKWD). One can recognise a KH-like domain in the interval 404 to 488 (RKVSTSELNK…PIRLEFRSDR (85 aa)).

Belongs to the TRAFAC class TrmE-Era-EngA-EngB-Septin-like GTPase superfamily. EngA (Der) GTPase family. As to quaternary structure, associates with the 50S ribosomal subunit.

In terms of biological role, GTPase that plays an essential role in the late steps of ribosome biogenesis. The chain is GTPase Der from Leptospira interrogans serogroup Icterohaemorrhagiae serovar copenhageni (strain Fiocruz L1-130).